Here is a 251-residue protein sequence, read N- to C-terminus: Histocompatibility antigen 60b (251 aa).

Positions 1–24 are cleaved as a signal peptide; it reads MAKSSLSLNWSLLVLLNFLGATLS. Residues 25-212 lie on the Extracellular side of the membrane; the sequence is TGTDSLSCEL…NSDTQGLSFT (188 aa). N-linked (GlcNAc...) asparagine glycosylation is found at Asn-63, Asn-93, Asn-126, and Asn-189. Residues 213 to 233 form a helical membrane-spanning segment; it reads WIVIICIGGIVSFMAFMVFAW. The Cytoplasmic segment spans residues 234–251; the sequence is CMLKKKKGALCCSSSSTT.

This sequence belongs to the NKG2D ligand family. As to expression, in strain C57BL/6J, strongly expressed in cardiac muscle and skeletal muscle, with lower expression levels in spleen, liver, kidney and thymus. In strain BALB/cJ, weakly expressed in cardiac muscle, spleen, kidney and thymus.

Its subcellular location is the cell membrane. Its function is as follows. Ligand for the KLRK1 immunosurveillance receptor. Binding to KLRK1 stimulates cell lysis in vitro. This Mus musculus (Mouse) protein is Histocompatibility antigen 60b.